Reading from the N-terminus, the 333-residue chain is L-lactate dehydrogenase A chain (333 aa).

NAD(+) contacts are provided by residues 30-58 (GMVG…MEDK) and Arg-100. The substrate site is built by Arg-107, Asn-139, and Arg-170. Asn-139 contacts NAD(+). His-194 (proton acceptor) is an active-site residue. Thr-249 provides a ligand contact to substrate.

The protein belongs to the LDH/MDH superfamily. LDH family. As to quaternary structure, homotetramer.

The protein localises to the cytoplasm. It carries out the reaction (S)-lactate + NAD(+) = pyruvate + NADH + H(+). The protein operates within fermentation; pyruvate fermentation to lactate; (S)-lactate from pyruvate: step 1/1. The chain is L-lactate dehydrogenase A chain (ldha) from Cyprinus carpio (Common carp).